The following is a 662-amino-acid chain: Glycogen debranching enzyme (662 aa).

The active-site Nucleophile is aspartate 338. Glutamate 373 acts as the Proton donor in catalysis.

It belongs to the glycosyl hydrolase 13 family.

It carries out the reaction Hydrolysis of (1-&gt;6)-alpha-D-glucosidic linkages to branches with degrees of polymerization of three or four glucose residues in limit dextrin.. Its pathway is glycan degradation; glycogen degradation. Its function is as follows. Removes maltotriose and maltotetraose chains that are attached by 1,6-alpha-linkage to the limit dextrin main chain, generating a debranched limit dextrin. The polypeptide is Glycogen debranching enzyme (Yersinia pestis bv. Antiqua (strain Angola)).